The chain runs to 449 residues: Tubulin alpha chain (449 aa).

The MREC motif signature appears at 1–4; the sequence is MREC. Glutamine 11 serves as a coordination point for GTP. Lysine 40 is subject to N6-acetyllysine. Positions 71, 140, 144, 145, 179, 206, and 228 each coordinate GTP. Glutamate 71 provides a ligand contact to Mg(2+). Glutamate 254 is an active-site residue. Residues 430–449 form a disordered region; that stretch reads KDYEEVGADSADAEDEGEEY. Residues 431 to 449 are compositionally biased toward acidic residues; that stretch reads DYEEVGADSADAEDEGEEY.

The protein belongs to the tubulin family. Dimer of alpha and beta chains. A typical microtubule is a hollow water-filled tube with an outer diameter of 25 nm and an inner diameter of 15 nM. Alpha-beta heterodimers associate head-to-tail to form protofilaments running lengthwise along the microtubule wall with the beta-tubulin subunit facing the microtubule plus end conferring a structural polarity. Microtubules usually have 13 protofilaments but different protofilament numbers can be found in some organisms and specialized cells. Mg(2+) is required as a cofactor. Post-translationally, some glutamate residues at the C-terminus are polyglycylated, resulting in polyglycine chains on the gamma-carboxyl group. Glycylation is mainly limited to tubulin incorporated into axonemes (cilia and flagella) whereas glutamylation is prevalent in neuronal cells, centrioles, axonemes, and the mitotic spindle. Both modifications can coexist on the same protein on adjacent residues, and lowering polyglycylation levels increases polyglutamylation, and reciprocally. The precise function of polyglycylation is still unclear. In terms of processing, some glutamate residues at the C-terminus are polyglutamylated, resulting in polyglutamate chains on the gamma-carboxyl group. Polyglutamylation plays a key role in microtubule severing by spastin (SPAST). SPAST preferentially recognizes and acts on microtubules decorated with short polyglutamate tails: severing activity by SPAST increases as the number of glutamates per tubulin rises from one to eight, but decreases beyond this glutamylation threshold. Acetylation of alpha chains at Lys-40 is located inside the microtubule lumen. This modification has been correlated with increased microtubule stability, intracellular transport and ciliary assembly. Post-translationally, undergoes a tyrosination/detyrosination cycle, the cyclic removal and re-addition of a C-terminal tyrosine residue by the enzymes tubulin tyrosine carboxypeptidase (MATCAP1, VASH1 or VASH2) and tubulin tyrosine ligase (TTL), respectively. In terms of processing, tyrosination promotes microtubule interaction with CAP-Gly microtubule plus-end tracking proteins. Tyrosinated tubulins regulate the initiation of dynein-driven motility. Detyrosination is involved in metaphase plate congression by guiding chromosomes during mitosis. Detyrosination increases microtubules-dependent mechanotransduction in dystrophic cardiac and skeletal muscle. In cardiomyocytes, detyrosinated microtubules are required to resist to contractile compression during contraction.

The protein localises to the cytoplasm. The protein resides in the cytoskeleton. The enzyme catalyses GTP + H2O = GDP + phosphate + H(+). Functionally, tubulin is the major constituent of microtubules, a cylinder consisting of laterally associated linear protofilaments composed of alpha- and beta-tubulin heterodimers. Microtubules grow by the addition of GTP-tubulin dimers to the microtubule end, where a stabilizing cap forms. Below the cap, tubulin dimers are in GDP-bound state, owing to GTPase activity of alpha-tubulin. In Xenopus laevis (African clawed frog), this protein is Tubulin alpha chain (tuba).